The following is a 128-amino-acid chain: Gastrotropin (128 aa).

Ala-2 is subject to N-acetylalanine.

It belongs to the calycin superfamily. Fatty-acid binding protein (FABP) family. As to expression, predominantly expressed in ileum; also expressed in ovary.

It is found in the cytoplasm. The protein localises to the membrane. Its function is as follows. Binds to bile acids and is involved in enterohepatic bile acid metabolism. Required for efficient apical to basolateral transport of conjugated bile acids in ileal enterocytes. Stimulates gastric acid and pepsinogen secretion. The chain is Gastrotropin (Fabp6) from Rattus norvegicus (Rat).